Reading from the N-terminus, the 743-residue chain is MDQKLSELVEVLTTSGEPQLNPEKLKELKKICRSSDEHINHVYHLLMTQLNQEHAEIRLSAFQIVTELFARSHLFRTLLISNFQEFLELTVETDHEQPLPPPKEVAQKMKILAIKTVQEWHEKFGEAYKKLSLGYHFLKQNKKIDFQDVRSRTQAERKREEEKQRRLENIYKEKVKKATAEMEDMLEEIQSSLTEMENCFRLLLPDPREFAVFTDEKDFASDMRTKPTSQSPSHSKSTSQSSAYSKSTSQVSFDNDDEQPCCSKNLPPFPSSCTSSASGAERSLGEGAKESDKSARKSDTDDSDGDYEGSREAFLRDHGLGSHAYSLSLEISTDLKVNENENNTDVLNNLMDAHKLLKQKYWPAVQSWIQLFTKAGTNSESLKCAIDVKKEIEAALKKYKEMNIDCHTKERKVMTASDDDDDDDEFEEVPEKEGYEPHIPDHLREEYGLEPSASKQPGKKTEVKRPNVPQVPPSQKRINDELNPTCAAATMKTMKDKMAKALPGSSRNAGEPKSKCPKRETDLSQAPVAPCGLDLHHWGEEQPSAGKMLKFSSLHRFWAPNEVDEEVESKELEALVKTRYVTLPGKFEPVKHKCLAPMPNGSLCERQDRYKCPFHGKIVPRDAIGVPINAEDRAREAREKFEKQGEEQDWRDPELMREIEQATGVDLGSSKCPVKGKGKGVKRNLKKKYPNLTDLKQKANTSRSRLEKKVFNTGSVKRVISAMNQADKRRHEKFANQFNYALN.

A VHS-like region spans residues 2–145 (DQKLSELVEV…HFLKQNKKID (144 aa)). The stretch at 147 to 199 (QDVRSRTQAERKREEEKQRRLENIYKEKVKKATAEMEDMLEEIQSSLTEMENC) forms a coiled coil. The interval 221 to 310 (SDMRTKPTSQ…DDSDGDYEGS (90 aa)) is disordered. The span at 226–252 (KPTSQSPSHSKSTSQSSAYSKSTSQVS) shows a compositional bias: low complexity. A compositionally biased stretch (basic and acidic residues) spans 283–300 (SLGEGAKESDKSARKSDT). Residues 380–411 (ESLKCAIDVKKEIEAALKKYKEMNIDCHTKER) are a coiled coil. Disordered stretches follow at residues 413–482 (VMTA…NDEL) and 500–525 (KALPGSSRNAGEPKSKCPKRETDLSQ). A compositionally biased stretch (acidic residues) spans 417-428 (SDDDDDDDEFEE). 2 stretches are compositionally biased toward basic and acidic residues: residues 429–447 (VPEKEGYEPHIPDHLREEY) and 510–522 (GEPKSKCPKRETD). A Glycyl lysine isopeptide (Lys-Gly) (interchain with G-Cter in ubiquitin) cross-link involves residue Lys432. Residues 591–618 (KHKCLAPMPNGSLCERQDRYKCPFHGKI) form a UVSSA-type zinc finger. Zn(2+) is bound by residues Cys594, Cys604, Cys612, and His615.

It belongs to the UVSSA family. In terms of processing, monoubiquitinated at Lys-432 in response to transcription stress; this promotes efficient transfer of TFIIH to stalled RNA polymerase II.

The protein resides in the chromosome. Functionally, factor involved in transcription-coupled nucleotide excision repair (TC-NER), a mechanism that rapidly removes RNA polymerase II-blocking lesions from the transcribed strand of active genes. Acts as a key adapter that promotes recruitment of factors involved in TC-NER. Facilitates the ubiquitination of the elongating form of RNA polymerase II (RNA pol IIo) at DNA damage sites, thereby promoting RNA pol IIo backtracking and access by the TC-NER machinery to lesion sites. Also promotes stabilization of ERCC6/CSB by recruiting deubiquitinating enzyme USP7 to TC-NER complexes, preventing UV-induced degradation of ERCC6 by the proteasome. Mediates the recruitment of the TFIIH complex and other factors that are required for nucleotide excision repair to RNA polymerase II. Also required to inactivate stalled RNA polymerase II by blocking the access of TCEA1/TFIIS, thereby preventing reactivation of RNA polymerase II. This chain is UV-stimulated scaffold protein A (uvssa), found in Xenopus tropicalis (Western clawed frog).